A 4731-amino-acid chain; its full sequence is Dynein axonemal heavy chain 8 (4731 aa).

The disordered stretch occupies residues 1-145 (MESEEGNAEP…SKFRRSMTGI (145 aa)). The span at 9–55 (EPPPPSEEAPPPVVEEAPPPLPPEDTAPPPPEEQAPPPEGDAAPPPT) shows a compositional bias: pro residues. Basic and acidic residues predominate over residues 66-75 (EAPHPEDPKL). The span at 94-106 (SDEEVTLPEDEES) shows a compositional bias: acidic residues. Polar residues predominate over residues 122 to 133 (SVLSDGISQSSR). A coiled-coil region spans residues 145 to 169 (IPNLQETLKEKQARFREARENRKMK). Ser917 carries the phosphoserine modification. Residues 1177 to 1201 (FQNNSRGSDQPPASGKPLKKEERSF) are disordered. The stretch at 1543–1567 (DVDIEKINAELQEFQNRCRKLPRAL) forms a coiled coil. AAA regions lie at residues 2049–2271 (YQNE…VLRT), 2331–2550 (SAVD…KLSL), 2657–2910 (FYPT…IWQG), and 3021–3275 (QFNE…YRRR). Residues 2087-2094 (GPAGTGKT) and 2369-2376 (GPSGSGKT) each bind ATP. Residues 3290-3587 (YKSIYTDKVK…MDLLNDADMC (298 aa)) form a stalk region. 3 coiled-coil regions span residues 3313–3405 (DKLM…ALNT), 3531–3583 (LKAN…LLND), and 3836–3871 (RVIL…DNLL). AAA regions lie at residues 3673 to 3903 (LVDP…EVSE) and 4118 to 4332 (ARKY…FIQN).

It belongs to the dynein heavy chain family. In terms of assembly, consists of at least two heavy chains and a number of intermediate and light chains. Isoform 1 and/or isoform 2 are expressed in spermatocytes and mature sperm (at protein level). Testis-specific. Accumulates exclusively in mid to late spermatocytes.

It localises to the cytoplasm. Its subcellular location is the cytoskeleton. It is found in the flagellum axoneme. Functionally, force generating protein component of the outer dynein arms (ODAs) in the sperm flagellum. Produces force towards the minus ends of microtubules. Dynein has ATPase activity; the force-producing power stroke is thought to occur on release of ADP. Involved in sperm motility; implicated in sperm flagellar assembly. This is Dynein axonemal heavy chain 8 (Dnah8) from Mus musculus (Mouse).